The sequence spans 250 residues: Mitochondrial inner membrane protease ATP23 (250 aa).

His-150 serves as a coordination point for a divalent metal cation. The active site involves Glu-151. A divalent metal cation is bound at residue His-154.

The protein belongs to the peptidase M76 family.

The protein resides in the mitochondrion inner membrane. Its function is as follows. Has a dual role in the assembly of mitochondrial ATPase. Acts as a protease that removes N-terminal residues of mitochondrial ATPase CF(0) subunit 6 at the intermembrane space side. Also involved in the correct assembly of the membrane-embedded ATPase CF(0) particle, probably mediating association of subunit 6 with the subunit 9 ring. In Yarrowia lipolytica (strain CLIB 122 / E 150) (Yeast), this protein is Mitochondrial inner membrane protease ATP23 (ATP23).